Reading from the N-terminus, the 191-residue chain is Large ribosomal subunit protein eL15 (191 aa).

Belongs to the eukaryotic ribosomal protein eL15 family.

The chain is Large ribosomal subunit protein eL15 (rpl15e) from Pyrobaculum aerophilum (strain ATCC 51768 / DSM 7523 / JCM 9630 / CIP 104966 / NBRC 100827 / IM2).